Reading from the N-terminus, the 253-residue chain is MLKFVILLSAVACALGGTVPEGLLPQLDGRIVGGSATTISSFPWQISLQRSGSHSCGGSIYSSNVIVTAAHCLQSVSASVLQIRAGSSYWSSGGVTFSVSSFKNHEGYNANTMVNDIAIIKINGALTFSSTIKAIGLASSNPANGAAASVSGWGTLSYGSSSIPSQLQYVNVNIVSQSQCASSTYGYGSQIRSTMICAAASGKDACQGDSGGPLVSGGVLVGVVSWGYGCAYSNYPGVYADVAALRSWVISNA.

The N-terminal stretch at 1–22 is a signal peptide; the sequence is MLKFVILLSAVACALGGTVPEG. A propeptide spans 23 to 30 (activation peptide); that stretch reads LLPQLDGR. A Peptidase S1 domain is found at 31–253; that stretch reads IVGGSATTIS…ALRSWVISNA (223 aa). C56 and C72 form a disulfide bridge. Residues H71 and D116 each act as charge relay system in the active site. 2 cysteine pairs are disulfide-bonded: C180/C197 and C206/C230. The active-site Charge relay system is the S210.

This sequence belongs to the peptidase S1 family.

It localises to the secreted. Its subcellular location is the extracellular space. The enzyme catalyses Preferential cleavage: Arg-|-Xaa, Lys-|-Xaa.. This chain is Trypsin delta, found in Drosophila melanogaster (Fruit fly).